We begin with the raw amino-acid sequence, 251 residues long: Pyridoxine 5'-phosphate synthase (251 aa).

Residue N7 participates in 3-amino-2-oxopropyl phosphate binding. Position 9 to 10 (D9 to H10) interacts with 1-deoxy-D-xylulose 5-phosphate. Residue R18 coordinates 3-amino-2-oxopropyl phosphate. H43 acts as the Proton acceptor in catalysis. R45 and H50 together coordinate 1-deoxy-D-xylulose 5-phosphate. Residue E73 is the Proton acceptor of the active site. Position 103 (T103) interacts with 1-deoxy-D-xylulose 5-phosphate. H197 functions as the Proton donor in the catalytic mechanism. 3-amino-2-oxopropyl phosphate contacts are provided by residues G198 and G219–H220.

This sequence belongs to the PNP synthase family. In terms of assembly, homooctamer; tetramer of dimers.

The protein localises to the cytoplasm. The catalysed reaction is 3-amino-2-oxopropyl phosphate + 1-deoxy-D-xylulose 5-phosphate = pyridoxine 5'-phosphate + phosphate + 2 H2O + H(+). It participates in cofactor biosynthesis; pyridoxine 5'-phosphate biosynthesis; pyridoxine 5'-phosphate from D-erythrose 4-phosphate: step 5/5. Its function is as follows. Catalyzes the complicated ring closure reaction between the two acyclic compounds 1-deoxy-D-xylulose-5-phosphate (DXP) and 3-amino-2-oxopropyl phosphate (1-amino-acetone-3-phosphate or AAP) to form pyridoxine 5'-phosphate (PNP) and inorganic phosphate. The protein is Pyridoxine 5'-phosphate synthase of Caulobacter sp. (strain K31).